The following is a 441-amino-acid chain: Vacuolar cation/proton exchanger 2 (441 aa).

Over 1–69 (MSCCKVPVLI…PKNSVLNSIK (69 aa)) the chain is Cytoplasmic. A helical membrane pass occupies residues 70 to 90 (IVIFCNKLNLLLPFGPLAILV). The Extracellular portion of the chain corresponds to 91–97 (HYMIDSK). Residues 98 to 118 (GWVFLLTLVGITPLAERLGYA) traverse the membrane as a helical segment. At 119 to 129 (TEQLACYTGPT) the chain is on the cytoplasmic side. Residues 130–150 (VGGLLNATFGNVTELIISIFA) form a helical membrane-spanning segment. The segment at 139–174 (GNVTELIISIFALKNGMIRVVQLTLLGSILSNMLLV) is cation selection. The Extracellular segment spans residues 151-166 (LKNGMIRVVQLTLLGS). Residues 167–187 (ILSNMLLVLGCAFFCGGLVFY) traverse the membrane as a helical segment. Residues 188–196 (QKDQVFDKG) are Cytoplasmic-facing. Residues 197–217 (IATVNSGLLLMAVMGILFPAV) form a helical membrane-spanning segment. At 218–231 (LHYTHSEVHAGSSE) the chain is on the extracellular side. A helical transmembrane segment spans residues 232-252 (LALSRFSSCIMLIAYAAYLFF). The Cytoplasmic portion of the chain corresponds to 253-286 (QLKSQSNSYSPLDEESNQNEETSAEDEDPEISKW). A helical membrane pass occupies residues 287–307 (EAIIWLSILTAWVSLLSGYLV). Over 308–311 (DAIE) the chain is Extracellular. The chain crosses the membrane as a helical span at residues 312 to 332 (GASVSWNIPIAFISTILLPIV). Topologically, residues 333-354 (GNAAEHAGAIMFAMKDKLDLSL) are cytoplasmic. Residues 333–368 (GNAAEHAGAIMFAMKDKLDLSLGVAIGSSIQISMFA) are cation selection. A helical transmembrane segment spans residues 355–375 (GVAIGSSIQISMFAVPFCVVI). The Extracellular segment spans residues 376–384 (GWMMGQQMD). A helical membrane pass occupies residues 385–405 (LNFQLFETAMLFITVIVVAFF). Over 406-412 (LQEGSSN) the chain is Cytoplasmic. The chain crosses the membrane as a helical span at residues 413-433 (YFKGLMLILCYLIVAASFFVH). The Extracellular portion of the chain corresponds to 434-441 (EDPHQDGI).

This sequence belongs to the Ca(2+):cation antiporter (CaCA) (TC 2.A.19) family. Cation/proton exchanger (CAX) subfamily.

Its subcellular location is the vacuole membrane. With respect to regulation, inhibited by excess of Ca(2+) and Cd(2+), Mn(2+), and Zn(2+). Functionally, vacuolar cation/proton exchanger (CAX). Translocates Ca(2+) and other metal ions into vacuoles using the proton gradient formed by H(+)-ATPase and H(+)-pyrophosphatase. This Arabidopsis thaliana (Mouse-ear cress) protein is Vacuolar cation/proton exchanger 2 (CAX2).